The primary structure comprises 737 residues: Cilium assembly protein DZIP1L (737 aa).

Positions 1 to 293 (MGFKGKYPQM…LKQSNEQFIQ (293 aa)) are interaction with Rab8. Residues 98–132 (VTDLKEAHTTAQEEIATLRKSLSESNNEVVQLHKR) are a coiled coil. The C2H2-type zinc finger occupies 144-167 (YPCHLCTKNFISNEALNVHIGRKH). Disordered stretches follow at residues 167-187 (HRVASPPSLTSATGKEKDRDK), 214-267 (ERNI…KEQL), 415-548 (SEFL…RKDA), 624-682 (KSPL…VSRD), and 698-737 (IRGASKSSLSSRPVPLPRKRVMFNTTEDGKSFNDSDDNLK). 2 stretches are compositionally biased toward basic and acidic residues: residues 244 to 266 (EPKEKDEDSGEARQSEASERKEQ) and 415 to 438 (SEFLKQKHDDDTYSIEEAPRKGSE). Positions 457 to 469 (SAGSSDSNPTYTK) are enriched in polar residues. Over residues 492–510 (SQEETENEEERSLTEEEGT) the composition is skewed to acidic residues. Residues 665 to 677 (SSEQQTRSPSPQR) are compositionally biased toward polar residues. The span at 724-737 (EDGKSFNDSDDNLK) shows a compositional bias: basic and acidic residues.

Belongs to the DZIP C2H2-type zinc-finger protein family. Component of a ciliary transition zone (TZ)-localized complex composed of DZIP1, Fam92 and Cby. Interacts directly with Cby. Interacts with Cep290 (via N-terminus). Interacts (via N-terminus) with Rab8. As to expression, in neurons of the second and third antennal segments, expressed at the tip of the dendrites.

Its subcellular location is the cytoplasm. The protein localises to the cytoskeleton. It localises to the microtubule organizing center. It is found in the centrosome. The protein resides in the centriole. Its subcellular location is the cilium basal body. Component of the DZIP1-Fam92-Cby complex which promotes ciliogenesis in sensory neurons and spermatocytes by acting downstream of Cep290 to initiate early ciliary membrane formation and thus transition zone (TZ) assembly. During spermatogenesis, also regulates distal elongation of the basal-body and their docking (anchoring) to the plasma membrane and as a consequence, regulates the initiation and proper elongation of axonemal microtubules. Within the complex, required to recruit or stabilize Rab8, Fam92 and Cby at the distal basal body of cilia to promote early ciliary membrane formation and initiate TZ assembly. Also acts with Fam92 to restrict Cep290 localization to the proximal part of the TZ. May also be involved in recruitment or stabilization of Mks1 at the TZ. The protein is Cilium assembly protein DZIP1L of Drosophila melanogaster (Fruit fly).